The sequence spans 541 residues: Chaperonin GroEL (541 aa).

Residues 29 to 32, 86 to 90, G413, and D495 each bind ATP; these read TLGP and DGTTT.

As to quaternary structure, forms a cylinder of 14 subunits composed of two heptameric rings stacked back-to-back. Interacts with the co-chaperonin GroES.

It localises to the cytoplasm. The catalysed reaction is ATP + H2O + a folded polypeptide = ADP + phosphate + an unfolded polypeptide.. Its function is as follows. Together with its co-chaperonin GroES, plays an essential role in assisting protein folding. The GroEL-GroES system forms a nano-cage that allows encapsulation of the non-native substrate proteins and provides a physical environment optimized to promote and accelerate protein folding. The protein is Chaperonin GroEL of Thermoanaerobacter brockii (Thermoanaerobium brockii).